A 781-amino-acid chain; its full sequence is Protein translocase subunit SecA 2 (781 aa).

Residues Gln-85, 103–107, and Asp-491 contribute to the ATP site; that span reads GEGKT.

Belongs to the SecA family. Monomer and homodimer. Part of the essential Sec protein translocation apparatus which comprises SecA, SecYEG and auxiliary proteins SecDF. Other proteins may also be involved.

Its subcellular location is the cell membrane. It is found in the cytoplasm. The enzyme catalyses ATP + H2O + cellular proteinSide 1 = ADP + phosphate + cellular proteinSide 2.. Functionally, part of the Sec protein translocase complex. Interacts with the SecYEG preprotein conducting channel. Has a central role in coupling the hydrolysis of ATP to the transfer of proteins into and across the cell membrane, serving as an ATP-driven molecular motor driving the stepwise translocation of polypeptide chains across the membrane. This chain is Protein translocase subunit SecA 2, found in Clostridioides difficile (strain 630) (Peptoclostridium difficile).